The primary structure comprises 605 residues: Aspartate--tRNA(Asp/Asn) ligase (605 aa).

Glutamate 172 lines the L-aspartate pocket. An aspartate region spans residues 196–199 (QLFK). Position 218 (arginine 218) interacts with L-aspartate. ATP is bound by residues 218–220 (RDE) and glutamine 227. Histidine 455 contributes to the L-aspartate binding site. ATP is bound at residue glutamate 489. Arginine 496 serves as a coordination point for L-aspartate. 541-544 (GLDR) provides a ligand contact to ATP.

Belongs to the class-II aminoacyl-tRNA synthetase family. Type 1 subfamily. Homodimer.

The protein localises to the cytoplasm. It carries out the reaction tRNA(Asx) + L-aspartate + ATP = L-aspartyl-tRNA(Asx) + AMP + diphosphate. Its function is as follows. Aspartyl-tRNA synthetase with relaxed tRNA specificity since it is able to aspartylate not only its cognate tRNA(Asp) but also tRNA(Asn). Reaction proceeds in two steps: L-aspartate is first activated by ATP to form Asp-AMP and then transferred to the acceptor end of tRNA(Asp/Asn). The protein is Aspartate--tRNA(Asp/Asn) ligase of Ralstonia nicotianae (strain ATCC BAA-1114 / GMI1000) (Ralstonia solanacearum).